Here is a 402-residue protein sequence, read N- to C-terminus: FMN-dependent alpha-hydroxy acid dehydrogenase qulF (402 aa).

The FMN hydroxy acid dehydrogenase domain maps to 22–394 (RLPAITTNPT…NRDCMRRISY (373 aa)). Residue Y48 coordinates a 2-oxocarboxylate. The FMN site is built by S130 and Q152. Y154 and R189 together coordinate a 2-oxocarboxylate. Position 265 (K265) interacts with FMN. H289 (proton acceptor) is an active-site residue. Position 292 (R292) interacts with a 2-oxocarboxylate. Residues 320-324 (DSGVR) and 343-344 (GR) each bind FMN.

Belongs to the FMN-dependent alpha-hydroxy acid dehydrogenase family. The cofactor is FMN.

Its function is as follows. FMN-dependent alpha-hydroxy acid dehydrogenase; part of the gene cluster that mediates the biosynthesis of quinolactacin A2 (QUL A2), a fungal alkaloid that features a quinolone-gamma-lactam hybrid, which is a potential pharmacophore for the treatment of cancer and Alzheimer's disease. The quinolone-gamma-lactam hybrid scaffold is synthesized from the combination of L-isoleucine (L-Ile) and the nonproteinogenic amino acid L-kynurenine, followed by quinolone cyclization, oxidative decarboxylation, and lactam formation. Additionally, the N-methyl group is derived from methionine, which might be catalyzed by an S-adenosylmethionine (SAM)-dependent methyltransferase. Bioconversion of L-tryptophan to L-kynurenine could be catalyzed by the indoleamine-2,3-dioxygenase (IDO) qulI to produce an unstable product, N-formyl-L-kynurenine, followed by kynurenine formamidase catalyzed hydrolysis. QulM then acts as a methyltransferase that methylates L-kynurenine at the N-4 position. The FMN-dependent alpha-hydroxy acid dehydrogenase qulF than functions as an oxidative decarboxylase which converts N-methylkynurenine into 2-aminobenzoylacetamide via 2 tandem reactions, including dehydrogenation and decarboxylation. An amidase located outside of the qul gene cluster further produces the unstable beta-keto acid precursor N-methyl-2-aminobenzoylacetate, which could be spontaneously dehydrated to form N-methyl-4-hydroxy-2-quinolone. The NRPS qulB is able to incorporate N-methyl-2-aminobenzoylacetate and efficiently compete with the spontaneous reaction. By further extending the beta-keto acid with L-Ile, qulA performs a Dieckmann condensation to form the gamma-lactam ring and release a 4-ketopyrrolidinone intermediate from the assembly line. This intermediate could plausibly further undergo a spontaneous cyclization to yield the final quinolone-gamma-lactam hybrid structure. The sequence is that of FMN-dependent alpha-hydroxy acid dehydrogenase qulF from Penicillium citrinum.